We begin with the raw amino-acid sequence, 337 residues long: Dihydroorotate dehydrogenase (quinone) (337 aa).

FMN-binding positions include 62–66 and T86; that span reads AGLDK. K66 contributes to the substrate binding site. 111 to 115 contributes to the substrate binding site; that stretch reads NRMGF. Residues N140 and N173 each contribute to the FMN site. Residue N173 coordinates substrate. S176 serves as the catalytic Nucleophile. N178 provides a ligand contact to substrate. FMN-binding residues include K218 and T246. 247 to 248 contacts substrate; sequence NT. FMN is bound by residues G269, G298, and 319-320; that span reads YS.

The protein belongs to the dihydroorotate dehydrogenase family. Type 2 subfamily. In terms of assembly, monomer. It depends on FMN as a cofactor.

The protein resides in the cell membrane. It carries out the reaction (S)-dihydroorotate + a quinone = orotate + a quinol. It participates in pyrimidine metabolism; UMP biosynthesis via de novo pathway; orotate from (S)-dihydroorotate (quinone route): step 1/1. Catalyzes the conversion of dihydroorotate to orotate with quinone as electron acceptor. This Wigglesworthia glossinidia brevipalpis protein is Dihydroorotate dehydrogenase (quinone).